The following is a 200-amino-acid chain: Glycerol-3-phosphate acyltransferase (200 aa).

Helical transmembrane passes span F2–V22, K51–A71, A84–F104, L114–V134, and F159–F179.

The protein belongs to the PlsY family. As to quaternary structure, probably interacts with PlsX.

Its subcellular location is the cell inner membrane. It carries out the reaction an acyl phosphate + sn-glycerol 3-phosphate = a 1-acyl-sn-glycero-3-phosphate + phosphate. Its pathway is lipid metabolism; phospholipid metabolism. Catalyzes the transfer of an acyl group from acyl-phosphate (acyl-PO(4)) to glycerol-3-phosphate (G3P) to form lysophosphatidic acid (LPA). This enzyme utilizes acyl-phosphate as fatty acyl donor, but not acyl-CoA or acyl-ACP. In Neisseria meningitidis serogroup C / serotype 2a (strain ATCC 700532 / DSM 15464 / FAM18), this protein is Glycerol-3-phosphate acyltransferase.